Consider the following 207-residue polypeptide: Octanoyltransferase (207 aa).

The region spanning 27–203 (ADTEDELWVV…HLETQFTPKA (177 aa)) is the BPL/LPL catalytic domain. Residues 66 to 73 (RGGQITYH), 133 to 135 (SLG), and 146 to 148 (GLA) contribute to the substrate site. Cysteine 164 acts as the Acyl-thioester intermediate in catalysis.

The protein belongs to the LipB family.

The protein localises to the cytoplasm. The catalysed reaction is octanoyl-[ACP] + L-lysyl-[protein] = N(6)-octanoyl-L-lysyl-[protein] + holo-[ACP] + H(+). It functions in the pathway protein modification; protein lipoylation via endogenous pathway; protein N(6)-(lipoyl)lysine from octanoyl-[acyl-carrier-protein]: step 1/2. In terms of biological role, catalyzes the transfer of endogenously produced octanoic acid from octanoyl-acyl-carrier-protein onto the lipoyl domains of lipoate-dependent enzymes. Lipoyl-ACP can also act as a substrate although octanoyl-ACP is likely to be the physiological substrate. The chain is Octanoyltransferase from Neisseria meningitidis serogroup A / serotype 4A (strain DSM 15465 / Z2491).